Consider the following 130-residue polypeptide: Small ribosomal subunit protein uS9 (130 aa).

This sequence belongs to the universal ribosomal protein uS9 family.

The chain is Small ribosomal subunit protein uS9 from Pseudomonas paraeruginosa (strain DSM 24068 / PA7) (Pseudomonas aeruginosa (strain PA7)).